The following is a 264-amino-acid chain: Thiazole synthase (264 aa).

The Schiff-base intermediate with DXP role is filled by K101. 1-deoxy-D-xylulose 5-phosphate contacts are provided by residues G162, 188 to 189 (AG), and 210 to 211 (NT).

This sequence belongs to the ThiG family. As to quaternary structure, homotetramer. Forms heterodimers with either ThiH or ThiS.

The protein localises to the cytoplasm. It catalyses the reaction [ThiS sulfur-carrier protein]-C-terminal-Gly-aminoethanethioate + 2-iminoacetate + 1-deoxy-D-xylulose 5-phosphate = [ThiS sulfur-carrier protein]-C-terminal Gly-Gly + 2-[(2R,5Z)-2-carboxy-4-methylthiazol-5(2H)-ylidene]ethyl phosphate + 2 H2O + H(+). It participates in cofactor biosynthesis; thiamine diphosphate biosynthesis. In terms of biological role, catalyzes the rearrangement of 1-deoxy-D-xylulose 5-phosphate (DXP) to produce the thiazole phosphate moiety of thiamine. Sulfur is provided by the thiocarboxylate moiety of the carrier protein ThiS. In vitro, sulfur can be provided by H(2)S. The polypeptide is Thiazole synthase (Chromobacterium violaceum (strain ATCC 12472 / DSM 30191 / JCM 1249 / CCUG 213 / NBRC 12614 / NCIMB 9131 / NCTC 9757 / MK)).